The sequence spans 261 residues: MAESHLQSSLITASQFFEIWLHFDADGSGYLEGKELQNLIQELQQARKKAGLELSPEMKTFVDQYGQRDDGKIGIVELAHVLPTEENFLLLFRCQQLKSCEEFMKTWRKYDTDHSGFIETEELKNFLKDLLEKANKTVDDTKLAEYTDLMLKLFDSNNDGKLELTEMARLLPVQENFLLKFQGIKMCGKEFNKAFELYDQDGNGYIDENELDALLKDLCEKNKQDLDINNITTYKKNIMALSDGGKLYRTDLALILCAGDN.

The residue at position 2 (A2) is an N-acetylalanine. The tract at residues 2–7 (AESHLQ) is interaction with RANBP9. 5 consecutive EF-hand domains span residues 11–46 (ITASQFFEIWLHFDADGSGYLEGKELQNLIQELQQA), 53–88 (ELSPEMKTFVDQYGQRDDGKIGIVELAHVLPTEENF), 98–133 (KSCEEFMKTWRKYDTDHSGFIETEELKNFLKDLLEK), 142–177 (KLAEYTDLMLKLFDSNNDGKLELTEMARLLPVQENF), and 186–221 (MCGKEFNKAFELYDQDGNGYIDENELDALLKDLCEK). 5 residues coordinate Ca(2+): D24, D26, S28, Y30, and E35. Ca(2+) contacts are provided by D111, D113, S115, E122, D155, N157, D159, K161, E166, D199, D201, N203, Y205, and E210.

The protein belongs to the calbindin family. Interacts with RANBP9.

In terms of biological role, buffers cytosolic calcium. May stimulate a membrane Ca(2+)-ATPase and a 3',5'-cyclic nucleotide phosphodiesterase. The polypeptide is Calbindin (CALB1) (Homo sapiens (Human)).